The following is a 120-amino-acid chain: U13-lycotoxin-Ls1c (120 aa).

A signal peptide spans 1–16; that stretch reads MKILFVLISILYAVYC. The propeptide occupies 17–54; it reads FSSEEDVDSAYLANELEPVEDINSEQYAALEPKEEQER. 3 cysteine pairs are disulfide-bonded: C56–C70, C69–C87, and C78–C85. The Agouti domain maps to 56–95; the sequence is CADMGQDRKDDCDCCLNIATCNCWFGRYFCSCTFGDYQTC.

This sequence belongs to the neurotoxin 05 (agouti) family. Post-translationally, contains 5 disulfide bonds. As to expression, expressed by the venom gland.

The protein localises to the secreted. This is U13-lycotoxin-Ls1c from Lycosa singoriensis (Wolf spider).